The primary structure comprises 71 residues: MAVEKTNSSSSLAEVIDRILDKGIVVDAWVRVSLVGIELLAIEARIVIASVETYLKYAEAVGLTQSAAMPA.

It belongs to the gas vesicle GvpA family. The gas vesicle shell is 2 nm thick and consists of a single layer of this protein. It forms helical ribs nearly perpendicular to the long axis of the vesicle.

It localises to the gas vesicle shell. In terms of biological role, gas vesicles are hollow, gas filled proteinaceous nanostructures found in some microorganisms. During planktonic growth they allow positioning of the organism at a favorable depth for light or nutrient acquisition. GvpA forms the protein shell. Functionally, cluster expression in E.coli (gvpA1-gvpA2-gvpC-gvpN-gvpJ-gvpK-gvpF-gvpG-gvpV-gvpW) allows cells to float and produces irregularly shaped gas vesicles. The chain is Gas vesicle protein A from Nostoc sp. (strain PCC 7120 / SAG 25.82 / UTEX 2576).